The chain runs to 428 residues: GTPase Obg (428 aa).

The Obg domain occupies 1-158 (MFVDQVKVYV…RYIVLELKVL (158 aa)). Positions 117 to 143 (AKGGRGGRGNTRFATPANPAPQLSEHG) are disordered. An OBG-type G domain is found at 159-329 (ADVGLVGFPS…LLFEVANQLE (171 aa)). GTP is bound by residues 165-172 (GFPSVGKS), 190-194 (FTTLV), 212-215 (DLPG), 282-285 (NKMD), and 310-312 (SAV). Residues Ser172 and Thr192 each coordinate Mg(2+). Positions 350 to 428 (TMEDEEIPFN…LLEFEFEFID (79 aa)) constitute an OCT domain.

This sequence belongs to the TRAFAC class OBG-HflX-like GTPase superfamily. OBG GTPase family. In terms of assembly, monomer. Mg(2+) serves as cofactor.

The protein localises to the cytoplasm. An essential GTPase which binds GTP, GDP and possibly (p)ppGpp with moderate affinity, with high nucleotide exchange rates and a fairly low GTP hydrolysis rate. Plays a role in control of the cell cycle, stress response, ribosome biogenesis and in those bacteria that undergo differentiation, in morphogenesis control. The polypeptide is GTPase Obg (Bacillus velezensis (strain DSM 23117 / BGSC 10A6 / LMG 26770 / FZB42) (Bacillus amyloliquefaciens subsp. plantarum)).